Consider the following 63-residue polypeptide: Bowman-birk type proteinase inhibitor (63 aa).

7 disulfides stabilise this stretch: C7–C61, C8–C23, C11–C57, C13–C21, C31–C38, C35–C50, and C40–C48.

Functionally, inhibits trypsin, chymotrypsin, plasmin and factor XIIa. Does not inhibit factor Xa, thrombin and plasma kallikrein. This is Bowman-birk type proteinase inhibitor from Amburana acreana (Cerejeira).